The primary structure comprises 160 residues: Transcriptional repressor NrdR (160 aa).

Residues 3-34 fold into a zinc finger; sequence CPFCGHADTQVVDSRVSEEGDTIRRRRRCLSC. The ATP-cone domain maps to 49–139; it reads PTVVKRDGSR…VYKSFEDIGE (91 aa).

This sequence belongs to the NrdR family. Requires Zn(2+) as cofactor.

Its function is as follows. Negatively regulates transcription of bacterial ribonucleotide reductase nrd genes and operons by binding to NrdR-boxes. This is Transcriptional repressor NrdR from Bordetella avium (strain 197N).